We begin with the raw amino-acid sequence, 188 residues long: HTH-type transcriptional regulator Mb3439c (188 aa).

In terms of domain architecture, HTH tetR-type spans 17–77 (EEVAAAILQA…AVLDHLGTKL (61 aa)). Residues 40-59 (SIRDIAARSKVNHGLVFRHF) constitute a DNA-binding region (H-T-H motif).

Functionally, negatively regulates the expression of sulfate ester dioxygenase Mb3440 and its own expression. In Mycobacterium bovis (strain ATCC BAA-935 / AF2122/97), this protein is HTH-type transcriptional regulator Mb3439c.